A 172-amino-acid polypeptide reads, in one-letter code: Large ribosomal subunit protein uL10 (172 aa).

It belongs to the universal ribosomal protein uL10 family. In terms of assembly, part of the ribosomal stalk of the 50S ribosomal subunit. The N-terminus interacts with L11 and the large rRNA to form the base of the stalk. The C-terminus forms an elongated spine to which L12 dimers bind in a sequential fashion forming a multimeric L10(L12)X complex.

Functionally, forms part of the ribosomal stalk, playing a central role in the interaction of the ribosome with GTP-bound translation factors. The protein is Large ribosomal subunit protein uL10 of Beijerinckia indica subsp. indica (strain ATCC 9039 / DSM 1715 / NCIMB 8712).